The chain runs to 74 residues: Large ribosomal subunit protein uL14c (74 aa).

The protein belongs to the universal ribosomal protein uL14 family. Part of the 50S ribosomal subunit.

The protein localises to the plastid. It localises to the chloroplast. Functionally, binds to 23S rRNA. This is Large ribosomal subunit protein uL14c (rpl14) from Oenothera ammophila (Evening primerose).